The chain runs to 256 residues: Thiazole synthase (256 aa).

Residue Lys95 is the Schiff-base intermediate with DXP of the active site. 1-deoxy-D-xylulose 5-phosphate is bound by residues Gly156, 182–183 (AG), and 204–205 (NT).

This sequence belongs to the ThiG family. Homotetramer. Forms heterodimers with either ThiH or ThiS.

It localises to the cytoplasm. It carries out the reaction [ThiS sulfur-carrier protein]-C-terminal-Gly-aminoethanethioate + 2-iminoacetate + 1-deoxy-D-xylulose 5-phosphate = [ThiS sulfur-carrier protein]-C-terminal Gly-Gly + 2-[(2R,5Z)-2-carboxy-4-methylthiazol-5(2H)-ylidene]ethyl phosphate + 2 H2O + H(+). Its pathway is cofactor biosynthesis; thiamine diphosphate biosynthesis. In terms of biological role, catalyzes the rearrangement of 1-deoxy-D-xylulose 5-phosphate (DXP) to produce the thiazole phosphate moiety of thiamine. Sulfur is provided by the thiocarboxylate moiety of the carrier protein ThiS. In vitro, sulfur can be provided by H(2)S. The protein is Thiazole synthase of Salmonella choleraesuis (strain SC-B67).